Here is a 731-residue protein sequence, read N- to C-terminus: Penicillin-binding protein 2a (731 aa).

At 1–56 (MKLDKLFEKFLSLFKKETSELEDSDSTILRRSRSDRKKLAQVGPIRKFWRRYHLTK) the chain is on the cytoplasmic side. A helical; Signal-anchor for type II membrane protein transmembrane segment spans residues 57–77 (IILILGLSAGLLVGIYLFAVA). The hydrophobic; associated with cytoplasmic membrane. Required for transglycosylase activity, but not for lipid II binding stretch occupies residues 78–156 (KSTNVNDLQN…FLAIVTAGRS (79 aa)). A transglycosylase region spans residues 78 to 300 (KSTNVNDLQN…SQLHDKYEGK (223 aa)). Residues 78–731 (KSTNVNDLQN…IWDSIVNLFR (654 aa)) are Extracellular-facing. The active-site Proton donor; for transglycosylase activity is the E131. Residues 301–731 (ISDYRYPSYF…IWDSIVNLFR (431 aa)) form a transpeptidase region. The active-site Acyl-ester intermediate; for transpeptidase activity is the S410. The tract at residues 674–694 (ANTKRQVQTNDNSQTDDNLSD) is disordered. Residues 676-690 (TKRQVQTNDNSQTDD) are compositionally biased toward polar residues.

This sequence in the N-terminal section; belongs to the glycosyltransferase 51 family. In the C-terminal section; belongs to the transpeptidase family. Homodimer. May also form higher order oligomers. Self-association may depend on its transmembrane and/or cytoplasmic regions. Interacts with MacP; interaction is required for the function of this protein.

The protein localises to the cell membrane. The protein resides in the secreted. It is found in the cell wall. It carries out the reaction Preferential cleavage: (Ac)2-L-Lys-D-Ala-|-D-Ala. Also transpeptidation of peptidyl-alanyl moieties that are N-acyl substituents of D-alanine.. The enzyme catalyses [GlcNAc-(1-&gt;4)-Mur2Ac(oyl-L-Ala-gamma-D-Glu-L-Lys-D-Ala-D-Ala)](n)-di-trans,octa-cis-undecaprenyl diphosphate + beta-D-GlcNAc-(1-&gt;4)-Mur2Ac(oyl-L-Ala-gamma-D-Glu-L-Lys-D-Ala-D-Ala)-di-trans,octa-cis-undecaprenyl diphosphate = [GlcNAc-(1-&gt;4)-Mur2Ac(oyl-L-Ala-gamma-D-Glu-L-Lys-D-Ala-D-Ala)](n+1)-di-trans,octa-cis-undecaprenyl diphosphate + di-trans,octa-cis-undecaprenyl diphosphate + H(+). It participates in cell wall biogenesis; peptidoglycan biosynthesis. Cell wall formation. Synthesis of cross-linked peptidoglycan (PG) from the lipid intermediates. Binds dansylated lipid II and catalyzes the polymerization of glycan chains. Hydrolyzes S2d (N-benzoyl-D-alanylmercaptoacetic acid) molecule, a synthetic thiolester analog of cell wall stem peptide. Active against bocillin, a fluorescent penicillin. No transpeptidase activity with non-fluorescent lysine-containing lipid II as substrate. The protein is Penicillin-binding protein 2a of Streptococcus pneumoniae serotype 2 (strain D39 / NCTC 7466).